Reading from the N-terminus, the 269-residue chain is MATKIFALLALHALLVSGTTAAIIPQCSLAPNAIIPQFIPPVTALGNEHLAVQAYPGQQVLSASILQQPIAQLQQQSLAHLTVQTITAQQQQQQQQQQQQQQFLSSLSALAVANQAAYLQQQLLTSNPHSLANAAAYQQQQQLQLAMANPTAYVQQQLLLSNPQAATNAATYLQQQQFQQILPALSQLRMANPTAYLQQQQLLPINQLALANTDAYLQQQQLLPVNPLVVANPLVAAFLQQQQLSSFNQISLVNPALSWQQPIIGGAIF.

Positions 1 to 21 (MATKIFALLALHALLVSGTTA) are cleaved as a signal peptide.

It belongs to the zein family.

Major seed storage prolamin. In Sorghum bicolor (Sorghum), this protein is Kafirin PGK1.